The sequence spans 66 residues: Xenoxin-2 (66 aa).

Cystine bridges form between C3–C24, C17–C37, C43–C58, and C59–C64.

Expressed by the skin dorsal glands.

Its subcellular location is the secreted. Its function is as follows. Lacks alpha-neurotoxic activity, has apparently no antibacterial activity, nor anti-coagulant potency. In Xenopus laevis (African clawed frog), this protein is Xenoxin-2.